A 260-amino-acid polypeptide reads, in one-letter code: Acetylglutamate kinase (260 aa).

Substrate-binding positions include 45 to 46 (GG), Arg-67, and Asn-159.

It belongs to the acetylglutamate kinase family. ArgB subfamily.

Its subcellular location is the cytoplasm. It catalyses the reaction N-acetyl-L-glutamate + ATP = N-acetyl-L-glutamyl 5-phosphate + ADP. Its pathway is amino-acid biosynthesis; L-arginine biosynthesis; N(2)-acetyl-L-ornithine from L-glutamate: step 2/4. In terms of biological role, catalyzes the ATP-dependent phosphorylation of N-acetyl-L-glutamate. This chain is Acetylglutamate kinase, found in Colwellia psychrerythraea (strain 34H / ATCC BAA-681) (Vibrio psychroerythus).